Here is a 450-residue protein sequence, read N- to C-terminus: Phosphoglucosamine mutase (450 aa).

The active-site Phosphoserine intermediate is Ser101. Positions 101, 241, 243, and 245 each coordinate Mg(2+). A Phosphoserine modification is found at Ser101.

This sequence belongs to the phosphohexose mutase family. It depends on Mg(2+) as a cofactor. In terms of processing, activated by phosphorylation.

It carries out the reaction alpha-D-glucosamine 1-phosphate = D-glucosamine 6-phosphate. Functionally, catalyzes the conversion of glucosamine-6-phosphate to glucosamine-1-phosphate. The chain is Phosphoglucosamine mutase from Listeria monocytogenes serotype 4b (strain F2365).